We begin with the raw amino-acid sequence, 368 residues long: tRNA-specific 2-thiouridylase MnmA (368 aa).

Residues 24 to 31 (AMSGGVDS) and L50 each bind ATP. The active-site Nucleophile is C117. A disulfide bond links C117 and C213. G141 serves as a coordination point for ATP. The tract at residues 163–165 (KDQ) is interaction with tRNA. The Cysteine persulfide intermediate role is filled by C213.

This sequence belongs to the MnmA/TRMU family.

The protein localises to the cytoplasm. The catalysed reaction is S-sulfanyl-L-cysteinyl-[protein] + uridine(34) in tRNA + AH2 + ATP = 2-thiouridine(34) in tRNA + L-cysteinyl-[protein] + A + AMP + diphosphate + H(+). Its function is as follows. Catalyzes the 2-thiolation of uridine at the wobble position (U34) of tRNA, leading to the formation of s(2)U34. The polypeptide is tRNA-specific 2-thiouridylase MnmA (Wolbachia pipientis subsp. Culex pipiens (strain wPip)).